The primary structure comprises 608 residues: Glutamyl-tRNA(Gln) amidotransferase subunit E (608 aa).

The interval 401–428 (PEETRAANPDGTTRFLRPRPGAARMYPE) is disordered.

This sequence belongs to the GatB/GatE family. GatE subfamily. Heterodimer of GatD and GatE.

The catalysed reaction is L-glutamyl-tRNA(Gln) + L-glutamine + ATP + H2O = L-glutaminyl-tRNA(Gln) + L-glutamate + ADP + phosphate + H(+). In terms of biological role, allows the formation of correctly charged Gln-tRNA(Gln) through the transamidation of misacylated Glu-tRNA(Gln) in organisms which lack glutaminyl-tRNA synthetase. The reaction takes place in the presence of glutamine and ATP through an activated gamma-phospho-Glu-tRNA(Gln). The GatDE system is specific for glutamate and does not act on aspartate. This is Glutamyl-tRNA(Gln) amidotransferase subunit E from Pyrobaculum arsenaticum (strain DSM 13514 / JCM 11321 / PZ6).